Here is a 367-residue protein sequence, read N- to C-terminus: Aminomethyltransferase (367 aa).

This sequence belongs to the GcvT family. As to quaternary structure, the glycine cleavage system is composed of four proteins: P, T, L and H.

The enzyme catalyses N(6)-[(R)-S(8)-aminomethyldihydrolipoyl]-L-lysyl-[protein] + (6S)-5,6,7,8-tetrahydrofolate = N(6)-[(R)-dihydrolipoyl]-L-lysyl-[protein] + (6R)-5,10-methylene-5,6,7,8-tetrahydrofolate + NH4(+). The glycine cleavage system catalyzes the degradation of glycine. The protein is Aminomethyltransferase of Mycolicibacterium paratuberculosis (strain ATCC BAA-968 / K-10) (Mycobacterium paratuberculosis).